The following is a 113-amino-acid chain: U11-theraphotoxin-Hhn1t (113 aa).

The signal sequence occupies residues 1–21 (MNTVRVTFLLVFVLAVSLGQA). Residues 22 to 74 (DKDENRMEMQEKTEQGKSYLDFAENLLLQKLEELEAKLLEEDSEESRNSRQKR) constitute a propeptide that is removed on maturation. Residues 60–69 (LEEDSEESRN) show a composition bias toward basic and acidic residues. A disordered region spans residues 60–83 (LEEDSEESRNSRQKRCIGEGVPCD). Cystine bridges form between Cys-75–Cys-90, Cys-82–Cys-95, and Cys-89–Cys-110.

Belongs to the neurotoxin 14 (magi-1) family. 01 (HNTX-16) subfamily. As to expression, expressed by the venom gland.

The protein resides in the secreted. Functionally, probable ion channel inhibitor. The polypeptide is U11-theraphotoxin-Hhn1t (Cyriopagopus hainanus (Chinese bird spider)).